Reading from the N-terminus, the 935-residue chain is Coiled-coil domain-containing protein 66 (935 aa).

Over residues 76 to 96 (LDTSQAKPENSRLTFSPSTDK) the composition is skewed to polar residues. A disordered region spans residues 76-103 (LDTSQAKPENSRLTFSPSTDKQYSEKDS). T114 is modified (phosphothreonine). S366 carries the phosphoserine modification. Residues 462-555 (LEHQKAIMAQ…EQRIRELAQK (94 aa)) are a coiled coil. 3 disordered regions span residues 470–491 (AQVEENRRKKRLEEEQRKKEEQ), 577–602 (TISSSHSDPEETADTSTASPKKDTGV), and 738–794 (ENLS…RTQQ). Residues 473-491 (EENRRKKRLEEEQRKKEEQ) are compositionally biased toward basic and acidic residues. Residues 567 to 935 (GAQVDYKAFT…NQEDNFSSSF (369 aa)) form a mediates localization to cilia, centrosomes and spindle microtubules and the interaction with PCM1, CEP290, CEP104 and CSPP1 region. Positions 590 to 602 (DTSTASPKKDTGV) are enriched in polar residues. S595 bears the Phosphoserine mark. Basic and acidic residues predominate over residues 752–782 (SHRETESESRLHLIKKVEEPLKTPSVSKERF). The segment covering 783 to 794 (QTSPAVKNRTQQ) has biased composition (polar residues).

As to quaternary structure, homodimer; disulfide-linked. Interacts with CEP290. Interacts with PCM1. Interacts with ARMC9, TOGARAM1, CSPP1 and CEP104. Interacts with CDK5RAP2, CEP152, CEP192, TBG1 and PRC1. As to expression, widely expressed. Expressed in retina by rod photoreceptors but also detected in outer plexiform and ganglion cell layers (at protein level).

The protein localises to the cytoplasm. It is found in the cytoskeleton. The protein resides in the microtubule organizing center. Its subcellular location is the centrosome. It localises to the centriolar satellite. The protein localises to the cell projection. It is found in the cilium. The protein resides in the cilium basal body. Its subcellular location is the cilium axoneme. It localises to the photoreceptor inner segment. The protein localises to the photoreceptor outer segment. Microtubule-binding protein required for ciliogenesis. May function in ciliogenesis by mediating the transport of proteins like BBS4 to the cilium, but also through the organization of the centriolar satellites. Required for the assembly of signaling-competent cilia with proper structure and length. Mediates this function in part by regulating transition zone assembly and basal body recruitment of the IFT-B complex. Cooperates with the ciliopathy proteins CSPP1 and CEP104 during cilium length regulation. Plays two important roles during cell division. First, is required for mitotic progression via regulation of spindle assembly, organization and orientation, levels of spindle microtubules (MTs), kinetochore-fiber integrity, and chromosome alignment. Second, functions during cytokinesis in part by regulating assembly and organization of central spindle and midbody MTs. Plays a role in retina morphogenesis and/or homeostasis. This chain is Coiled-coil domain-containing protein 66, found in Mus musculus (Mouse).